A 757-amino-acid polypeptide reads, in one-letter code: Probable inorganic carbon transporter subunit DabA (757 aa).

Zn(2+) is bound by residues Cys-321, Asp-323, His-475, and Cys-490.

Belongs to the inorganic carbon transporter (TC 9.A.2) DabA family. Forms a complex with DabB. Zn(2+) serves as cofactor.

Its subcellular location is the cell inner membrane. In terms of biological role, part of an energy-coupled inorganic carbon pump. This Idiomarina loihiensis (strain ATCC BAA-735 / DSM 15497 / L2-TR) protein is Probable inorganic carbon transporter subunit DabA.